Consider the following 421-residue polypeptide: 2',3'-cyclic-nucleotide 3'-phosphodiesterase (421 aa).

Ser6 and Ser9 each carry phosphoserine. Tyr110 carries the post-translational modification Phosphotyrosine. Ser170 is modified (phosphoserine). His251 serves as the catalytic Proton acceptor. Substrate is bound at residue Thr253. The active-site Proton donor is His330. Thr332 provides a ligand contact to substrate. Ser359 carries the post-translational modification Phosphoserine. Cys418 carries the cysteine methyl ester modification. Residue Cys418 is the site of S-farnesyl cysteine attachment. The propeptide at 419-421 (TII) is removed in mature form.

It belongs to the 2H phosphoesterase superfamily. CNPase family. As to quaternary structure, exists as monomers and homodimers.

Its subcellular location is the membrane. The protein localises to the melanosome. The catalysed reaction is a nucleoside 2',3'-cyclic phosphate + H2O = a nucleoside 2'-phosphate + H(+). Catalyzes the formation of 2'-nucleotide products from 2',3'-cyclic substrates. May participate in RNA metabolism in the myelinating cell, CNP is the third most abundant protein in central nervous system myelin. This is 2',3'-cyclic-nucleotide 3'-phosphodiesterase from Pongo abelii (Sumatran orangutan).